Here is a 180-residue protein sequence, read N- to C-terminus: Dual-action ribosomal maturation protein DarP (180 aa).

Basic and acidic residues predominate over residues 1–13; sequence MKPDKTENTEHGI. Residues 1 to 21 are disordered; sequence MKPDKTENTEHGIEPVSKTKR.

This sequence belongs to the DarP family.

The protein localises to the cytoplasm. Its function is as follows. Member of a network of 50S ribosomal subunit biogenesis factors which assembles along the 30S-50S interface, preventing incorrect 23S rRNA structures from forming. Promotes peptidyl transferase center (PTC) maturation. The sequence is that of Dual-action ribosomal maturation protein DarP from Methylobacillus flagellatus (strain ATCC 51484 / DSM 6875 / VKM B-1610 / KT).